We begin with the raw amino-acid sequence, 365 residues long: MSLNKVRASEYRRIFVNDHPIMDARAPVEFEKGAFPASVNHPLMEDEERKKVGTCYKERGQEAALKLGHSLVHGEIKQQRVDAWLDFFSKNPDGYLYCFRGGLRSQLTQQWLKEAGLDIPFIEGGYKAMRQFLIETIDDAPNMKPMLILSGITGSGKTDFLLKRKEAVDLEGLAHHRGSSFGRYHEPQPSQINFENALAVALLKHQDSAAKHLLLEDESYLIGRSALPQAFYTGMQAAGVLVLEESLDARLARLLNEYVHKMHSGYIQRLGEEAGFEAFAQYLAQSITGIKKRLGNKQHDEFQAIITNALNIQTSQNDTSAHLEWIELLLVKYYDPMYQYQIDKKADRVIFKGDHQAMHQWLDNH.

The 124-residue stretch at 15 to 138 (FVNDHPIMDA…MRQFLIETID (124 aa)) folds into the Rhodanese domain. The active-site S-selanylcysteine intermediate is C98.

The protein belongs to the SelU family. Monomer.

It catalyses the reaction 5-methylaminomethyl-2-thiouridine(34) in tRNA + selenophosphate + (2E)-geranyl diphosphate + H2O + H(+) = 5-methylaminomethyl-2-selenouridine(34) in tRNA + (2E)-thiogeraniol + phosphate + diphosphate. The enzyme catalyses 5-methylaminomethyl-2-thiouridine(34) in tRNA + (2E)-geranyl diphosphate = 5-methylaminomethyl-S-(2E)-geranyl-thiouridine(34) in tRNA + diphosphate. It carries out the reaction 5-methylaminomethyl-S-(2E)-geranyl-thiouridine(34) in tRNA + selenophosphate + H(+) = 5-methylaminomethyl-2-(Se-phospho)selenouridine(34) in tRNA + (2E)-thiogeraniol. The catalysed reaction is 5-methylaminomethyl-2-(Se-phospho)selenouridine(34) in tRNA + H2O = 5-methylaminomethyl-2-selenouridine(34) in tRNA + phosphate. In terms of biological role, involved in the post-transcriptional modification of the uridine at the wobble position (U34) of tRNA(Lys), tRNA(Glu) and tRNA(Gln). Catalyzes the conversion of 2-thiouridine (S2U-RNA) to 2-selenouridine (Se2U-RNA). Acts in a two-step process involving geranylation of 2-thiouridine (S2U) to S-geranyl-2-thiouridine (geS2U) and subsequent selenation of the latter derivative to 2-selenouridine (Se2U) in the tRNA chain. The polypeptide is tRNA 2-selenouridine synthase (Shewanella halifaxensis (strain HAW-EB4)).